A 2773-amino-acid polypeptide reads, in one-letter code: Peramine synthetase A (2773 aa).

The interval 246 to 644 is adenylation 1; it reads FEDQVYSQPL…GRKDAQVKIR (399 aa). The Carrier 1 domain maps to 774-850; that stretch reads QPTCEMEERM…DLAKNCSQTL (77 aa). Ser-811 is modified (O-(pantetheine 4'-phosphoryl)serine). Residues 888–1301 are condensation; that stretch reads QDAYPCTRLQ…MSSAEDLEQI (414 aa). An adenylation 2 region spans residues 1321–1720; the sequence is ADQVQARPDS…GRKDTQVKVR (400 aa). The methylation (Met) domain stretch occupies residues 1810 to 1949; sequence IGRDFVGWSS…IIQHLASLGS (140 aa). The interval 2250 to 2271 is disordered; the sequence is MLSESLQQKAPPTARKRLPSTA. The Carrier 2 domain maps to 2267-2345; sequence LPSTAPERAM…HLLQTAAAGV (79 aa). O-(pantetheine 4'-phosphoryl)serine is present on Ser-2304. Residues 2397–2715 are thiesterase (TE) domain; it reads TVVLTGANGF…LQDLADTARS (319 aa).

Belongs to the NRP synthetase family. It depends on pantetheine 4'-phosphate as a cofactor.

It catalyses the reaction (S)-1-pyrroline-5-carboxylate + L-arginine + S-adenosyl-L-methionine + 2 ATP = peramine + 2 AMP + S-adenosyl-L-homocysteine + 2 diphosphate + H2O + 2 H(+). Functionally, nonribosomal peptide synthetase involved in the biosynthesis of peramine, a pyrrolopyrazine synthesized in association with the grass host that protects the plant from insect herbivory. The single multifunctional NRPS perA seems to be responsible for all catalytic steps in the biosynthesis of peramine. The condensation domain of perA is proposed to catalyze formation of a peptide bond between 1-pyrroline-5-carboxylate and arginine. The methylation domain of perA would catalyze the N-methylation of the alpha-amino group of arginine. The reductase domain is proposed to be responsible for reduction of the thioester and the cyclization to form an iminium ion resulting in release from the peptide synthetase. Deprotonation of this intermediate and oxidation of the pyrroline ring would give rise to peramine. This final oxidation to give the pyrrole functionality may be spontaneous. In Epichloe festucae (strain Fl1), this protein is Peramine synthetase A.